The primary structure comprises 190 residues: GTP cyclohydrolase 1 (190 aa).

Cys78, His81, and Cys150 together coordinate Zn(2+).

The protein belongs to the GTP cyclohydrolase I family. Toroid-shaped homodecamer, composed of two pentamers of five dimers.

It catalyses the reaction GTP + H2O = 7,8-dihydroneopterin 3'-triphosphate + formate + H(+). It participates in cofactor biosynthesis; 7,8-dihydroneopterin triphosphate biosynthesis; 7,8-dihydroneopterin triphosphate from GTP: step 1/1. Its activity is regulated as follows. K(+) ions moderately increases the Vmax, whereas UTP and Ca(2+) and Mg(2+) ions drastically increase the Km for GTP. The sequence is that of GTP cyclohydrolase 1 (folE) from Bacillus subtilis (strain 168).